Consider the following 190-residue polypeptide: 6,7-dimethyl-8-ribityllumazine synthase (190 aa).

Residues Trp31, 65-67, and 89-91 each bind 5-amino-6-(D-ribitylamino)uracil; these read SFE and CVI. Position 94–95 (94–95) interacts with (2S)-2-hydroxy-3-oxobutyl phosphate; the sequence is ET. Residue His97 is the Proton donor of the active site. Phe122 serves as a coordination point for 5-amino-6-(D-ribitylamino)uracil. Residue Arg136 coordinates (2S)-2-hydroxy-3-oxobutyl phosphate.

This sequence belongs to the DMRL synthase family.

The enzyme catalyses (2S)-2-hydroxy-3-oxobutyl phosphate + 5-amino-6-(D-ribitylamino)uracil = 6,7-dimethyl-8-(1-D-ribityl)lumazine + phosphate + 2 H2O + H(+). It functions in the pathway cofactor biosynthesis; riboflavin biosynthesis; riboflavin from 2-hydroxy-3-oxobutyl phosphate and 5-amino-6-(D-ribitylamino)uracil: step 1/2. Catalyzes the formation of 6,7-dimethyl-8-ribityllumazine by condensation of 5-amino-6-(D-ribitylamino)uracil with 3,4-dihydroxy-2-butanone 4-phosphate. This is the penultimate step in the biosynthesis of riboflavin. This chain is 6,7-dimethyl-8-ribityllumazine synthase, found in Flavobacterium johnsoniae (strain ATCC 17061 / DSM 2064 / JCM 8514 / BCRC 14874 / CCUG 350202 / NBRC 14942 / NCIMB 11054 / UW101) (Cytophaga johnsonae).